Reading from the N-terminus, the 102-residue chain is Small ribosomal subunit protein uS10 (102 aa).

It belongs to the universal ribosomal protein uS10 family. In terms of assembly, part of the 30S ribosomal subunit.

Involved in the binding of tRNA to the ribosomes. This Sulfolobus acidocaldarius (strain ATCC 33909 / DSM 639 / JCM 8929 / NBRC 15157 / NCIMB 11770) protein is Small ribosomal subunit protein uS10.